Reading from the N-terminus, the 356-residue chain is Protein RecA (356 aa).

Gly77–Thr84 lines the ATP pocket.

It belongs to the RecA family.

Its subcellular location is the cytoplasm. Can catalyze the hydrolysis of ATP in the presence of single-stranded DNA, the ATP-dependent uptake of single-stranded DNA by duplex DNA, and the ATP-dependent hybridization of homologous single-stranded DNAs. It interacts with LexA causing its activation and leading to its autocatalytic cleavage. In Caulobacter sp. (strain K31), this protein is Protein RecA.